Consider the following 258-residue polypeptide: Probable succinate transporter subunit YjjP (258 aa).

Helical transmembrane passes span 116–137, 143–160, 171–191, 197–217, and 231–251; these read YPRWLLVLMVGLSCACFCKLNN, AVVTFFASTVAMYIRQLL, FCITAFVATTISGLMLRLPAF, IAMAASVLLLVPGFPLINAVA, and WAIASLLTLATCIGVVMAMTM.

Belongs to the ThrE exporter (TC 2.A.79) family. In terms of assembly, the transporter is composed of YjjB and YjjP.

The protein localises to the cell inner membrane. Involved in succinate export with YjjB. Both proteins are required for export. Participates in succinate export, but also in the export of other dicarboxylates, such as fumarate and malate. Contributes to succinate production under both aerobic and anaerobic conditions, and increases fumarate and malate production during anaerobic succinate production. The polypeptide is Probable succinate transporter subunit YjjP (Klebsiella aerogenes (strain ATCC 13048 / DSM 30053 / CCUG 1429 / JCM 1235 / KCTC 2190 / NBRC 13534 / NCIMB 10102 / NCTC 10006 / CDC 819-56) (Enterobacter aerogenes)).